Here is a 238-residue protein sequence, read N- to C-terminus: Zinc import ATP-binding protein ZnuC (238 aa).

Residues 5–220 (IQLNNISVNF…SEFIAIFGNI (216 aa)) enclose the ABC transporter domain. 37 to 44 (GPNGAGKS) lines the ATP pocket.

It belongs to the ABC transporter superfamily. Zinc importer (TC 3.A.1.15.5) family. In terms of assembly, the complex is composed of two ATP-binding proteins (ZnuC), two transmembrane proteins (ZnuB) and a solute-binding protein (ZnuA).

It is found in the cell membrane. It catalyses the reaction Zn(2+)(out) + ATP(in) + H2O(in) = Zn(2+)(in) + ADP(in) + phosphate(in) + H(+)(in). Its function is as follows. Part of the ABC transporter complex ZnuABC involved in zinc import. Responsible for energy coupling to the transport system. The chain is Zinc import ATP-binding protein ZnuC from Buchnera aphidicola subsp. Baizongia pistaciae (strain Bp).